A 326-amino-acid chain; its full sequence is Phospho-N-acetylmuramoyl-pentapeptide-transferase (326 aa).

A run of 9 helical transmembrane segments spans residues 3-23, 51-71, 79-99, 115-135, 138-158, 169-189, 195-215, 221-243, and 306-326; these read ISIS…PAFI, TMGG…VALF, VGMI…DDFL, LALQ…GGDM, VFGY…FWLV, GIDG…GVIA, MDIL…FVFN, VFMG…MALH, and FFFW…LYLM.

It belongs to the glycosyltransferase 4 family. MraY subfamily. Requires Mg(2+) as cofactor.

The protein resides in the cell membrane. The catalysed reaction is UDP-N-acetyl-alpha-D-muramoyl-L-alanyl-gamma-D-glutamyl-L-lysyl-D-alanyl-D-alanine + di-trans,octa-cis-undecaprenyl phosphate = Mur2Ac(oyl-L-Ala-gamma-D-Glu-L-Lys-D-Ala-D-Ala)-di-trans,octa-cis-undecaprenyl diphosphate + UMP. It functions in the pathway cell wall biogenesis; peptidoglycan biosynthesis. Functionally, catalyzes the initial step of the lipid cycle reactions in the biosynthesis of the cell wall peptidoglycan: transfers peptidoglycan precursor phospho-MurNAc-pentapeptide from UDP-MurNAc-pentapeptide onto the lipid carrier undecaprenyl phosphate, yielding undecaprenyl-pyrophosphoryl-MurNAc-pentapeptide, known as lipid I. This Streptococcus pneumoniae (strain Taiwan19F-14) protein is Phospho-N-acetylmuramoyl-pentapeptide-transferase.